The chain runs to 274 residues: 2,3,4,5-tetrahydropyridine-2,6-dicarboxylate N-succinyltransferase (274 aa).

Substrate-binding residues include arginine 104 and aspartate 141.

It belongs to the transferase hexapeptide repeat family. In terms of assembly, homotrimer.

It localises to the cytoplasm. The catalysed reaction is (S)-2,3,4,5-tetrahydrodipicolinate + succinyl-CoA + H2O = (S)-2-succinylamino-6-oxoheptanedioate + CoA. The protein operates within amino-acid biosynthesis; L-lysine biosynthesis via DAP pathway; LL-2,6-diaminopimelate from (S)-tetrahydrodipicolinate (succinylase route): step 1/3. The sequence is that of 2,3,4,5-tetrahydropyridine-2,6-dicarboxylate N-succinyltransferase from Salmonella arizonae (strain ATCC BAA-731 / CDC346-86 / RSK2980).